A 905-amino-acid chain; its full sequence is Isoleucine--tRNA ligase (905 aa).

Positions 56 to 66 match the 'HIGH' region motif; sequence PYANGNIHMGT. Glutamate 563 lines the L-isoleucyl-5'-AMP pocket. The short motif at 604–608 is the 'KMSKS' region element; that stretch reads KMSKS. Position 607 (lysine 607) interacts with ATP.

This sequence belongs to the class-I aminoacyl-tRNA synthetase family. IleS type 1 subfamily. In terms of assembly, monomer.

Its subcellular location is the cytoplasm. It catalyses the reaction tRNA(Ile) + L-isoleucine + ATP = L-isoleucyl-tRNA(Ile) + AMP + diphosphate. Catalyzes the attachment of isoleucine to tRNA(Ile). As IleRS can inadvertently accommodate and process structurally similar amino acids such as valine, to avoid such errors it has two additional distinct tRNA(Ile)-dependent editing activities. One activity is designated as 'pretransfer' editing and involves the hydrolysis of activated Val-AMP. The other activity is designated 'posttransfer' editing and involves deacylation of mischarged Val-tRNA(Ile). The sequence is that of Isoleucine--tRNA ligase from Pelagibacter ubique (strain HTCC1062).